The chain runs to 367 residues: Auxin efflux carrier component 8 (367 aa).

Residues 1–6 are Extracellular-facing; it reads MISWLD. The helical transmembrane segment at 7–27 threads the bilayer; sequence IYHVVSATVPLYVSMTLGFLS. Over 28–38 the chain is Cytoplasmic; the sequence is ARHLKLFSPEQ. The helical transmembrane segment at 39–59 threads the bilayer; it reads CAGINKFVAKFSIPLLSFQII. Position 51 (Ile-51) interacts with (indol-3-yl)acetate. Residues 60–69 are Extracellular-facing; sequence SENNPFKMSP. A helical transmembrane segment spans residues 70–90; the sequence is KLILSDILQKFLVVVVLAMVL. Residues 91–105 are Cytoplasmic-facing; it reads RFWHPTGGRGGKLGW. Residues 106–126 traverse the membrane as a helical segment; sequence VITGLSISVLPNTLILGMPIL. Positions 117 and 119 each coordinate (indol-3-yl)acetate. Residues 127–136 lie on the Extracellular side of the membrane; the sequence is SAIYGDEAAS. The chain crosses the membrane as a helical span at residues 137-157; that stretch reads ILEQIVVLQSLIWYTILLFLF. Tyr-150 serves as a coordination point for (indol-3-yl)acetate. The Cytoplasmic segment spans residues 158–227; the sequence is ELNAARALPS…LIINPNTYAT (70 aa). Positions 168–194 are disordered; the sequence is SGASLEHTGNDQEEANIEDEPKEEEDE. Over residues 178-194 the composition is skewed to acidic residues; that stretch reads DQEEANIEDEPKEEEDE. Residues 228–248 form a helical membrane-spanning segment; it reads LIGIIWATLHFRLGWNLPEMI. Residues 249-251 are Extracellular-facing; sequence DKS. Residues 252-272 form a helical membrane-spanning segment; the sequence is IHLLSDGGLGMAMFSLGLFMA. Residues 273 to 288 lie on the Cytoplasmic side of the membrane; that stretch reads SQSSIIACGTKMAIIT. Residues 289-309 form a helical membrane-spanning segment; it reads MLLKFVLGPALMIASAYCIRL. Residues 310 to 312 are Extracellular-facing; sequence KST. A helical membrane pass occupies residues 313–333; it reads LFKVAILQAALPQGVVPFVFA. (indol-3-yl)acetate contacts are provided by Val-327 and Val-328. Residues 334 to 344 are Cytoplasmic-facing; it reads KEYNLHPEIIS. A helical membrane pass occupies residues 345-365; that stretch reads TGVIFGMLIALPTTLAYYFLL. Residues 366-367 are Extracellular-facing; it reads DL.

This sequence belongs to the auxin efflux carrier (TC 2.A.69.1) family. Homodimer. In terms of tissue distribution, expressed in veins of mature leaves. Strongly expressed in pollen.

It localises to the endoplasmic reticulum membrane. The protein localises to the cell membrane. With respect to regulation, auxin efflux carrier activity is competitively inhibited by naptalamate (N-1-naphthylphthalamic acid, NPA). Its function is as follows. Acts as a component of the auxin efflux carrier. Component of the intracellular auxin-transport pathway in the male gametophyte. Involved in the regulation of auxin homeostasis in pollen. Involved in the efflux of auxin from the endoplasmic reticulum into the cytoplasm. Binds auxins including indole-3-acetic acid (IAA), naphthaleneacetic acid (NAA) and the herbicide 2,4-dichlorophenoxyacetic acid (2,4-D), but barely indole-3-butyric acid (IBA) and 2-phenylacetic acid (PAA). PIN5 and PIN8 may have an antagonistic/compensatory activity. Involved in the control of vein patterning. Redundantly with PIN6, inhibits the vein-formation-promoting functions of PIN5. PIN5, PIN6, and PIN8 control vein network geometry, but they are expressed in mutually exclusive domains of leaf vascular cells. In Arabidopsis thaliana (Mouse-ear cress), this protein is Auxin efflux carrier component 8.